Here is a 359-residue protein sequence, read N- to C-terminus: Outer membrane protein assembly factor BamC (359 aa).

The N-terminal stretch at Met1–Ala34 is a signal peptide. Cys35 carries the N-palmitoyl cysteine lipid modification. A lipid anchor (S-diacylglycerol cysteine) is attached at Cys35.

It belongs to the BamC family. Part of the Bam complex, which is composed of the outer membrane protein BamA, and four lipoproteins BamB, BamC, BamD and BamE.

The protein resides in the cell outer membrane. In terms of biological role, part of the outer membrane protein assembly complex, which is involved in assembly and insertion of beta-barrel proteins into the outer membrane. The polypeptide is Outer membrane protein assembly factor BamC (Rahnella sp. (strain Y9602)).